Here is a 229-residue protein sequence, read N- to C-terminus: Lipoprotein-releasing system ATP-binding protein LolD (229 aa).

The region spanning Leu9 to Ala229 is the ABC transporter domain. Ala45–Ser52 contacts ATP.

Belongs to the ABC transporter superfamily. Lipoprotein translocase (TC 3.A.1.125) family. The complex is composed of two ATP-binding proteins (LolD) and two transmembrane proteins (LolC and LolE).

The protein resides in the cell inner membrane. Part of the ABC transporter complex LolCDE involved in the translocation of mature outer membrane-directed lipoproteins, from the inner membrane to the periplasmic chaperone, LolA. Responsible for the formation of the LolA-lipoprotein complex in an ATP-dependent manner. The polypeptide is Lipoprotein-releasing system ATP-binding protein LolD (Granulibacter bethesdensis (strain ATCC BAA-1260 / CGDNIH1)).